Consider the following 36-residue polypeptide: Pancreatic polypeptide (36 aa).

Tyr-36 is modified (tyrosine amide).

This sequence belongs to the NPY family.

Its subcellular location is the secreted. Hormone secreted by pancreatic cells that acts as a regulator of pancreatic and gastrointestinal functions probably by signaling through the G protein-coupled receptor NPY4R2. The polypeptide is Pancreatic polypeptide (PPY) (Macaca mulatta (Rhesus macaque)).